Reading from the N-terminus, the 163-residue chain is ADP-ribosylation factor-like protein 2-binding protein (163 aa).

It belongs to the ARL2BP family. As to quaternary structure, interacts with GTP bound ARL2 and ARL3; the complex ARL2-ARL2BP as well as ARL2BP alone, binds to SLC25A4/ANT1. Interaction with ARL2 may be required for cilia basal body localization. Interacts with STAT3; interaction is enhanced with ARL2. Found in a complex with ARL2BP, ARL2 and SLC25A6. Found in a complex with ARL2, ARL2BP and SLC25A4. Interacts with STAT2, STAT3 and STAT4. Ubiquitous with higher expression in brain, especially in hippocampus and cortex. Also expressed in lung, cerebellum, liver, kidney, spleen and heart (at protein level).

The protein localises to the cytoplasm. It is found in the mitochondrion intermembrane space. It localises to the cytoskeleton. The protein resides in the microtubule organizing center. Its subcellular location is the centrosome. The protein localises to the nucleus. It is found in the spindle. It localises to the cilium basal body. Together with ARL2, plays a role in the nuclear translocation, retention and transcriptional activity of STAT3. May play a role as an effector of ARL2. This Rattus norvegicus (Rat) protein is ADP-ribosylation factor-like protein 2-binding protein (Arl2bp).